A 54-amino-acid chain; its full sequence is Insulin (54 aa).

3 disulfides stabilise this stretch: cysteine 7–cysteine 39, cysteine 19–cysteine 52, and cysteine 38–cysteine 43.

The protein belongs to the insulin family. In terms of assembly, heterodimer of a B chain and an A chain linked by two disulfide bonds.

The protein resides in the secreted. Insulin decreases blood glucose concentration. It increases cell permeability to monosaccharides, amino acids and fatty acids. It accelerates glycolysis, the pentose phosphate cycle, and glycogen synthesis in liver. The sequence is that of Insulin (ins) from Squalus acanthias (Spiny dogfish).